The primary structure comprises 348 residues: Maintenance of mitochondrial morphology protein 1 (348 aa).

Over 1 to 35 the chain is Lumenal; the sequence is MAGKADLGHTGISDNIVERQIFVPQPNNAWSFTQG. Residues 36-56 traverse the membrane as a helical segment; that stretch reads LMCGQASVVVVLLVFIKFFVF. Topologically, residues 57–348 are cytoplasmic; it reads SEAPPSSGAA…GKTEKVNGNE (292 aa). Residues 114 to 323 form the SMP-LTD domain; the sequence is NPESLDWFNV…EPKFQVVRLP (210 aa). A disordered region spans residues 328-348; that stretch reads RSKNTREPVGAGKTEKVNGNE.

This sequence belongs to the MMM1 family. In terms of assembly, homodimer. Component of the ER-mitochondria encounter structure (ERMES) or MDM complex, composed of MMM1, MDM10, MDM12 and MDM34. An MMM1 homodimer associates with one molecule of MDM12 on each side in a pairwise head-to-tail manner, and the SMP-LTD domains of MMM1 and MDM12 generate a continuous hydrophobic tunnel for phospholipid trafficking.

The protein localises to the endoplasmic reticulum membrane. Component of the ERMES/MDM complex, which serves as a molecular tether to connect the endoplasmic reticulum (ER) and mitochondria. Components of this complex are involved in the control of mitochondrial shape and protein biogenesis, and function in nonvesicular lipid trafficking between the ER and mitochondria. The MDM12-MMM1 subcomplex functions in the major beta-barrel assembly pathway that is responsible for biogenesis of all outer membrane beta-barrel proteins, and acts in a late step after the SAM complex. The MDM10-MDM12-MMM1 subcomplex further acts in the TOM40-specific pathway after the action of the MDM12-MMM1 complex. Essential for establishing and maintaining the structure of mitochondria and maintenance of mtDNA nucleoids. The protein is Maintenance of mitochondrial morphology protein 1 of Clavispora lusitaniae (strain ATCC 42720) (Yeast).